Here is a 415-residue protein sequence, read N- to C-terminus: MKTKMFGLHEPICIKLLEQAIELKDYIVVRMILNQQENINTYKHFNMLRKAVLNHDHNLVNIFIDKNFNINIADSVGYTLLRYAVEVDDVNIAKILLDAGSIINKNDYRLLHSAITHENKKMIELLCLHGININVKDDKGYTALYYTICNNNYDMVCFLLEKNADISIVNKYSMLHFLSTSNKYHNVMAVLLDKGIDVNIINHVKAPIHVAVERNNIYGTMLLINRNADVNIKELHGGRTSLHLAIKERNYEAAFVLINNGANVDSFDDVGNTPIFIAASLQDVRFMKLLLDNGADINVRNVFGETPVNMVITGGSKEVTQYTVSYLISLKVDNIVLNDFCAYKQNMNLIHRINYGSPRLFMEYIGDIYEWHLPYSVLTDDKPINYSKIQSKVSHNESRFLPYKKRYNYNNTLIQ.

ANK repeat units lie at residues 12-41, 43-72, 76-105, 107-135, 139-168, 170-200, 203-232, 237-266, 270-299, and 303-332; these read ICIKLLEQAIELKDYIVVRMILNQQENINT, KHFNMLRKAVLNHDHNLVNIFIDKNFNINI, VGYTLLRYAVEVDDVNIAKILLDAGSIINK, DYRLLHSAITHENKKMIELLCLHGININV, KGYTALYYTICNNNYDMVCFLLEKNADISI, NKYSMLHFLSTSNKYHNVMAVLLDKGIDVNI, HVKAPIHVAVERNNIYGTMLLINRNADVNI, GGRTSLHLAIKERNYEAAFVLINNGANVDS, VGNTPIFIAASLQDVRFMKLLLDNGADINV, and FGETPVNMVITGGSKEVTQYTVSYLISLKV.

The sequence is that of Putative ankyrin repeat protein FPV034 (ANK2) from Fowlpox virus (strain NVSL) (FPV).